Reading from the N-terminus, the 550-residue chain is Membrane protein insertase YidC (550 aa).

The helical transmembrane segment at 6–26 (LIVFIVLSFGLLFVWQEYFAP) threads the bilayer. The tract at residues 30–59 (PKPVAAAVQPDGTPAPATARPADSPATGKL) is disordered. 4 consecutive transmembrane segments (helical) span residues 360–380 (WGWA…PLSA), 430–450 (LPIV…LASV), 472–492 (ILPA…PPPA), and 504–524 (PLAF…YWLV).

It belongs to the OXA1/ALB3/YidC family. Type 1 subfamily. In terms of assembly, interacts with the Sec translocase complex via SecD. Specifically interacts with transmembrane segments of nascent integral membrane proteins during membrane integration.

It localises to the cell inner membrane. Required for the insertion and/or proper folding and/or complex formation of integral membrane proteins into the membrane. Involved in integration of membrane proteins that insert both dependently and independently of the Sec translocase complex, as well as at least some lipoproteins. Aids folding of multispanning membrane proteins. This chain is Membrane protein insertase YidC, found in Laribacter hongkongensis (strain HLHK9).